The chain runs to 358 residues: 3-isopropylmalate dehydrogenase (358 aa).

Residue 77-90 (GPKWDNLPIDQRPE) coordinates NAD(+). Substrate contacts are provided by R98, R108, R137, and D221. Positions 221, 245, and 249 each coordinate Mg(2+). 279-291 (GSAPDIAHLNIAN) serves as a coordination point for NAD(+).

Belongs to the isocitrate and isopropylmalate dehydrogenases family. LeuB type 1 subfamily. As to quaternary structure, homodimer. Mg(2+) is required as a cofactor. Requires Mn(2+) as cofactor.

The protein resides in the cytoplasm. It catalyses the reaction (2R,3S)-3-isopropylmalate + NAD(+) = 4-methyl-2-oxopentanoate + CO2 + NADH. Its pathway is amino-acid biosynthesis; L-leucine biosynthesis; L-leucine from 3-methyl-2-oxobutanoate: step 3/4. Catalyzes the oxidation of 3-carboxy-2-hydroxy-4-methylpentanoate (3-isopropylmalate) to 3-carboxy-4-methyl-2-oxopentanoate. The product decarboxylates to 4-methyl-2 oxopentanoate. The sequence is that of 3-isopropylmalate dehydrogenase from Campylobacter jejuni (strain RM1221).